The primary structure comprises 160 residues: Photosystem II extrinsic protein V (160 aa).

Residues 1–25 (MKRFFLVAIASVLFFFNTMVGSANA) form the signal peptide. Positions 62, 65, 66, and 117 each coordinate heme c.

This sequence belongs to the cytochrome c family. PsbV subfamily. In terms of assembly, PSII is composed of 1 copy each of membrane proteins PsbA, PsbB, PsbC, PsbD, PsbE, PsbF, PsbH, PsbI, PsbJ, PsbK, PsbL, PsbM, PsbT, PsbX, PsbY, PsbZ, Psb30/Ycf12, peripheral proteins PsbO, CyanoQ (PsbQ), PsbU, PsbV and a large number of cofactors. It forms dimeric complexes. The cyanobacterial oxygen-evolving complex is composed of PsbO, CyanoQ (PsbQ), PsbV and PsbU. Requires heme c as cofactor.

The protein localises to the cellular thylakoid membrane. One of the extrinsic, lumenal subunits of photosystem II (PSII). PSII is a light-driven water plastoquinone oxidoreductase, using light energy to abstract electrons from H(2)O, generating a proton gradient subsequently used for ATP formation. The extrinsic proteins stabilize the structure of photosystem II oxygen-evolving complex (OEC), the ion environment of oxygen evolution and protect the OEC against heat-induced inactivation. Low-potential cytochrome c that plays a role in the OEC of PSII, required for normal function or stabilization of PSII. The protein is Photosystem II extrinsic protein V of Synechocystis sp. (strain ATCC 27184 / PCC 6803 / Kazusa).